Reading from the N-terminus, the 190-residue chain is Holliday junction branch migration complex subunit RuvA (190 aa).

Residues 1-64 (MIGKLTGTLL…EDAQLLYGFG (64 aa)) are domain I. Residues 65 to 137 (TAQERQAFRE…LKGKLGADVG (73 aa)) form a domain II region. The flexible linker stretch occupies residues 137–141 (GVRAH). Positions 142-190 (AANDNQADILQALLALGYNDKEAAAALKALPADVGVSEGIKLALKSLSK) are domain III.

This sequence belongs to the RuvA family. As to quaternary structure, homotetramer. Forms an RuvA(8)-RuvB(12)-Holliday junction (HJ) complex. HJ DNA is sandwiched between 2 RuvA tetramers; dsDNA enters through RuvA and exits via RuvB. An RuvB hexamer assembles on each DNA strand where it exits the tetramer. Each RuvB hexamer is contacted by two RuvA subunits (via domain III) on 2 adjacent RuvB subunits; this complex drives branch migration. In the full resolvosome a probable DNA-RuvA(4)-RuvB(12)-RuvC(2) complex forms which resolves the HJ.

It is found in the cytoplasm. Functionally, the RuvA-RuvB-RuvC complex processes Holliday junction (HJ) DNA during genetic recombination and DNA repair, while the RuvA-RuvB complex plays an important role in the rescue of blocked DNA replication forks via replication fork reversal (RFR). RuvA specifically binds to HJ cruciform DNA, conferring on it an open structure. The RuvB hexamer acts as an ATP-dependent pump, pulling dsDNA into and through the RuvAB complex. HJ branch migration allows RuvC to scan DNA until it finds its consensus sequence, where it cleaves and resolves the cruciform DNA. The protein is Holliday junction branch migration complex subunit RuvA of Acidovorax sp. (strain JS42).